The chain runs to 941 residues: Cilia- and flagella-associated protein 69 (941 aa).

Residues 1-10 (MWTEEAAATA) are compositionally biased toward low complexity. The interval 1-23 (MWTEEAAATAEARESGIRNKSSS) is disordered.

The protein localises to the cell projection. Its subcellular location is the cilium. It is found in the flagellum. Its function is as follows. Cilium- and flagellum-associated protein. In the olfactory epithelium, regulates the speed of activation and termination of the odor response and thus contributes to the robustness of olfactory transduction pathways. Required for sperm flagellum assembly and stability. The sequence is that of Cilia- and flagella-associated protein 69 from Papio anubis (Olive baboon).